Consider the following 590-residue polypeptide: Leucine-rich repeat transmembrane neuronal protein 4 (590 aa).

An N-terminal signal peptide occupies residues 1–30 (MGFRLITQLKGMSVLLVLFPTLLLVMLTGA). The region spanning 31-59 (QRACPKNCRCDGKIVYCESHAFADIPENI) is the LRRNT domain. At 31–424 (QRACPKNCRC…HEYEHVSFHK (394 aa)) the chain is on the extracellular side. The N-linked (GlcNAc...) asparagine glycan is linked to N58. LRR repeat units follow at residues 60–83 (SGGS…QFAG), 84–107 (LNQL…AFQG), 108–131 (IRRL…TFHP), 132–155 (VPNL…QFKG), 157–179 (RKLI…VFQD), 180–203 (CRNL…AFAG), 205–227 (LKLK…HFPR), 228–251 (LFNL…LTWT), 252–275 (WSSL…TFKC), and 276–299 (LPNL…TVNA). N-linked (GlcNAc...) asparagine glycosylation occurs at N126. N-linked (GlcNAc...) asparagine glycosylation is present at N291. Positions 311–362 (NMWECSRSICPLFYWLKNFKGNKESTMICAGPKHIQGEKVSDAVETYNICSD) constitute an LRRCT domain. Residues 425-445 (IIAGSVALFLSVAMILLVIYV) form a helical membrane-spanning segment. Topologically, residues 446-590 (SWKRYPASMK…PAIYLERITN (145 aa)) are cytoplasmic.

This sequence belongs to the LRRTM family. In terms of assembly, peripherally associated with AMPAR complex. AMPAR complex consists of an inner core made of 4 pore-forming GluA/GRIA proteins (GRIA1, GRIA2, GRIA3 and GRIA4) and 4 major auxiliary subunits arranged in a twofold symmetry. One of the two pairs of distinct binding sites is occupied either by CNIH2, CNIH3 or CACNG2, CACNG3. The other harbors CACNG2, CACNG3, CACNG4, CACNG8 or GSG1L. This inner core of AMPAR complex is complemented by outer core constituents binding directly to the GluA/GRIA proteins at sites distinct from the interaction sites of the inner core constituents. Outer core constituents include at least PRRT1, PRRT2, CKAMP44/SHISA9, FRRS1L and NRN1. The proteins of the inner and outer core serve as a platform for other, more peripherally associated AMPAR constituents, including LRRTM4. Alone or in combination, these auxiliary subunits control the gating and pharmacology of the AMPAR complex and profoundly impact their biogenesis and protein processing. In terms of tissue distribution, expressed in the brain (at protein level).

The protein localises to the cell membrane. It localises to the postsynaptic cell membrane. Its function is as follows. May play a role in the development and maintenance of the nervous system. Exhibits strong synaptogenic activity, restricted to excitatory presynaptic differentiation. The polypeptide is Leucine-rich repeat transmembrane neuronal protein 4 (Lrrtm4) (Rattus norvegicus (Rat)).